Consider the following 164-residue polypeptide: MERFLENAMYASRWLLAPIYIGLSVALLALTLKFFQEVYHLLPHVLEMAEAELILVLLSMIDMALVGGLLVMVMISGYENFVSQLDIDEGKEKLDWLGKMDSGSLKLKVAASIVAISSIHLLRVFMDAQKIPNDKLLWYVLIHMTFVVSAFVMSYLEKMAKHAH.

Transmembrane regions (helical) follow at residues 15–35 (LLAP…LKFF), 53–73 (LILV…LVMV), 103–125 (GSLK…LRVF), and 136–156 (LLWY…MSYL).

It belongs to the UPF0114 family.

The protein resides in the cell membrane. The sequence is that of UPF0114 protein Avin_40830 from Azotobacter vinelandii (strain DJ / ATCC BAA-1303).